The sequence spans 325 residues: MWLSTFLALLIFVECVIVVYIPAYIESKLSKIKKNRFFNMENFENIASGAILALAFLHMLPEVIILSNKKNMNLYYIFILVLVSVTFLNITDILYDHHFESTFDVNCTLACENSNNQIKNINDKEITTNYIDIKSNEVIDLELKAMDTNINNNNNNNNNNKTDPCKTNIFFEIFKSNSFFIVLSLFIHSFIEGLLMGSLKDKNAIIIVGLSMLAHKWAECLIVYKNVVNKIENPLLASIYAWSFILSLPLGVFIAIFSFPSNEFVEIIFSSIACGFFLYLSFNMTKEIKITKSNKHFISFSYFLGVGGMSTLMILFNSFESNNII.

Transmembrane regions (helical) follow at residues Thr5–Ile25, Ile46–Leu66, and Leu74–Leu94. Residues Asn106 and Asn160 are each glycosylated (N-linked (GlcNAc...) asparagine). 4 helical membrane passes run Phe179 to Leu199, Ile239 to Phe259, Phe264 to Met284, and His296 to Phe316.

The protein resides in the cytoplasmic vesicle membrane. Putative transporter for the divalent zinc and iron cations. The polypeptide is Putative metal ion transporter ZIPCO (Plasmodium falciparum (isolate 3D7)).